The following is a 322-amino-acid chain: Lipoyl synthase (322 aa).

7 residues coordinate [4Fe-4S] cluster: Cys-69, Cys-74, Cys-80, Cys-95, Cys-99, Cys-102, and Ser-309. Residues 81–298 form the Radical SAM core domain; it reads FNHGTATFMI…GVKAKALGFD (218 aa).

This sequence belongs to the radical SAM superfamily. Lipoyl synthase family. [4Fe-4S] cluster is required as a cofactor.

The protein resides in the cytoplasm. It catalyses the reaction [[Fe-S] cluster scaffold protein carrying a second [4Fe-4S](2+) cluster] + N(6)-octanoyl-L-lysyl-[protein] + 2 oxidized [2Fe-2S]-[ferredoxin] + 2 S-adenosyl-L-methionine + 4 H(+) = [[Fe-S] cluster scaffold protein] + N(6)-[(R)-dihydrolipoyl]-L-lysyl-[protein] + 4 Fe(3+) + 2 hydrogen sulfide + 2 5'-deoxyadenosine + 2 L-methionine + 2 reduced [2Fe-2S]-[ferredoxin]. It functions in the pathway protein modification; protein lipoylation via endogenous pathway; protein N(6)-(lipoyl)lysine from octanoyl-[acyl-carrier-protein]: step 2/2. Its function is as follows. Catalyzes the radical-mediated insertion of two sulfur atoms into the C-6 and C-8 positions of the octanoyl moiety bound to the lipoyl domains of lipoate-dependent enzymes, thereby converting the octanoylated domains into lipoylated derivatives. This Psychromonas ingrahamii (strain DSM 17664 / CCUG 51855 / 37) protein is Lipoyl synthase.